An 807-amino-acid polypeptide reads, in one-letter code: Glycerol-3-phosphate acyltransferase (807 aa).

The HXXXXD motif signature appears at 305-310 (CHRSHM).

The protein belongs to the GPAT/DAPAT family.

Its subcellular location is the cell inner membrane. The enzyme catalyses sn-glycerol 3-phosphate + an acyl-CoA = a 1-acyl-sn-glycero-3-phosphate + CoA. The protein operates within phospholipid metabolism; CDP-diacylglycerol biosynthesis; CDP-diacylglycerol from sn-glycerol 3-phosphate: step 1/3. The sequence is that of Glycerol-3-phosphate acyltransferase from Escherichia coli O139:H28 (strain E24377A / ETEC).